Here is a 545-residue protein sequence, read N- to C-terminus: Chaperonin GroEL 1 (545 aa).

Residues 30 to 33 (TLGP), lysine 51, 87 to 91 (DGTTT), glycine 415, and aspartate 496 each bind ATP.

This sequence belongs to the chaperonin (HSP60) family. As to quaternary structure, forms a cylinder of 14 subunits composed of two heptameric rings stacked back-to-back. Interacts with the co-chaperonin GroES.

It is found in the cytoplasm. The enzyme catalyses ATP + H2O + a folded polypeptide = ADP + phosphate + an unfolded polypeptide.. Together with its co-chaperonin GroES, plays an essential role in assisting protein folding. The GroEL-GroES system forms a nano-cage that allows encapsulation of the non-native substrate proteins and provides a physical environment optimized to promote and accelerate protein folding. In Nitrobacter hamburgensis (strain DSM 10229 / NCIMB 13809 / X14), this protein is Chaperonin GroEL 1.